The chain runs to 216 residues: Small ribosomal subunit protein uS3c (216 aa).

Positions 43–116 constitute a KH type-2 domain; the sequence is IKNYVQKNMR…RLNIAITRVA (74 aa).

It belongs to the universal ribosomal protein uS3 family. As to quaternary structure, part of the 30S ribosomal subunit.

It localises to the plastid. The protein localises to the chloroplast. In Drimys granadensis, this protein is Small ribosomal subunit protein uS3c (rps3).